Consider the following 189-residue polypeptide: Transcription factor FapR (189 aa).

It belongs to the FapR family.

Functionally, transcriptional factor involved in regulation of membrane lipid biosynthesis by repressing genes involved in fatty acid and phospholipid metabolism. This chain is Transcription factor FapR, found in Listeria monocytogenes serotype 4b (strain CLIP80459).